Reading from the N-terminus, the 236-residue chain is Glycosylphosphatidylinositol anchor biosynthesis protein 11 (236 aa).

2 helical membrane passes run 40 to 60 and 65 to 85; these read TLTIPFHSALLIFGLYKFGLT and GVMLKGIFSLIPLQLLYGYLI. N99 carries N-linked (GlcNAc...) asparagine glycosylation. 4 helical membrane passes run 107-127, 139-159, 184-204, and 215-235; these read LLAGGIVISLVLSVPLFVALI, ETYLLSIHLSLLIFYPSLVLY, ILLSAVLAVIGTWFGVIPIPL, and ITLLTGAYIGSFVGGIACFLF.

The protein belongs to the PIGF family.

The protein localises to the endoplasmic reticulum membrane. It participates in glycolipid biosynthesis; glycosylphosphatidylinositol-anchor biosynthesis. Acts in the GPI biosynthetic pathway between GlcNAc-PI synthesis and GPI transfer to protein. The protein is Glycosylphosphatidylinositol anchor biosynthesis protein 11 (GPI11) of Debaryomyces hansenii (strain ATCC 36239 / CBS 767 / BCRC 21394 / JCM 1990 / NBRC 0083 / IGC 2968) (Yeast).